Reading from the N-terminus, the 234-residue chain is MAVVSLSEMMEAGAHFGHQTRRWNPKMSKYIYCARNGVHIIDLVKTALCMNNAYKWTRNAAKSGKRFLFVGTKKQASDVVAQEAVRCGAAYVNQRWLGGMLTNWTTMKARIERLKDLERMESSGAIAMRPKKEAAVLRRELERLQKYLGGLKGMRRLPDVVVLVDQRRESNAVLEARKLDISLVSMLDTNCDPDLCEVPIPCNDDAVRSVQLILGRLADAINEGRKGSNDQRKN.

This sequence belongs to the universal ribosomal protein uS2 family.

This chain is Small ribosomal subunit protein uS2, found in Prochlorococcus marinus subsp. pastoris (strain CCMP1986 / NIES-2087 / MED4).